We begin with the raw amino-acid sequence, 282 residues long: Aldo-keto reductase ML1669 (282 aa).

Tyr-57 functions as the Proton donor in the catalytic mechanism. Positions 197, 235, 237, 238, 239, 246, 247, and 273 each coordinate NADPH.

Belongs to the aldo/keto reductase family.

The chain is Aldo-keto reductase ML1669 from Mycobacterium leprae (strain TN).